Here is a 359-residue protein sequence, read N- to C-terminus: MAEAITYADLRFVKAPLKKSISSRLGQDPGADDDGEITYENVQVPAVLGVPSSLASSVLGDKAAVKSEQPTASWRAVTSPAVGRILPCRTTCLRYLLLGLLLTCLLLGVTAICLGVRYLQVSQQLQQTNRVLEVTNSSLRQQLRLKITQLGQSAEDLQGSRRELAQSQEALQVEQRAHQAAEGQLQACQADRQKTKETLQSEEQQRRALEQKLSNMENRLKPFFTCGSADTCCPSGWIMHQKSCFYISLTSKNWQESQKQCETLSSKLATFSEIYPQSHSYYFLNSLLPNGGSGNSYWTGLSSNKDWKLTDDTQRTRTYAQSSKCNKVHKTWSWWTLESESCRSSLPYICEMTAFRFPD.

At Met-1 to Tyr-95 the chain is on the cytoplasmic side. Tyr-7 and Tyr-39 each carry phosphotyrosine; by LYN. A helical; Signal-anchor for type II membrane protein transmembrane segment spans residues Leu-96–Val-116. At Arg-117–Asp-359 the chain is on the extracellular side. The N-linked (GlcNAc...) asparagine glycan is linked to Asn-136. Positions Cys-232–Met-352 constitute a C-type lectin domain. 3 disulfide bridges follow: Cys-233/Cys-244, Cys-261/Cys-350, and Cys-325/Cys-342.

As to quaternary structure, homodimer; disulfide-linked. Associates with CD5. Interacts (tyrosine phosphorylated) with PTPN6/SHP-1. Post-translationally, phosphorylated upon engagement of the B-cell receptor, probably by LYN or SYK. Phosphorylation at Tyr-7 is important for interaction with PTPN6/SHP-1. As to expression, pre-B-cells and B-cells but not terminally differentiated plasma cells.

It localises to the membrane. Co-receptor of B cell receptor (BCR) that plays both positive and negative roles on B-cell functions. Recognizes the Sm/ribonucleoprotein (RNP) self-antigen ligand, and coligation of CD72 and BCR inhibits BCR signaling. Mechanistically, ligand binding leads to the recruitment of PTPN6/SHP-1 to the BCR complex which is inhibitory to BCR signaling. Also acts as a ligand for CD5 and thereby plays a critical role in maintaining regulatory T and B-cell homeostasis. The protein is B-cell differentiation antigen CD72 (CD72) of Homo sapiens (Human).